The following is a 95-amino-acid chain: MIKENVYFDGNVKSLGFSQQDGESTVGVMAPGQYTFGTGAPERMTVVKGALTIKRVTDADWVTFTAGEAFEVAGNSSFDLQVEVATAYLCEFLPA.

Belongs to the nucleoside phosphorylase PpnP family.

It carries out the reaction a purine D-ribonucleoside + phosphate = a purine nucleobase + alpha-D-ribose 1-phosphate. The catalysed reaction is adenosine + phosphate = alpha-D-ribose 1-phosphate + adenine. The enzyme catalyses cytidine + phosphate = cytosine + alpha-D-ribose 1-phosphate. It catalyses the reaction guanosine + phosphate = alpha-D-ribose 1-phosphate + guanine. It carries out the reaction inosine + phosphate = alpha-D-ribose 1-phosphate + hypoxanthine. The catalysed reaction is thymidine + phosphate = 2-deoxy-alpha-D-ribose 1-phosphate + thymine. The enzyme catalyses uridine + phosphate = alpha-D-ribose 1-phosphate + uracil. It catalyses the reaction xanthosine + phosphate = alpha-D-ribose 1-phosphate + xanthine. In terms of biological role, catalyzes the phosphorolysis of diverse nucleosides, yielding D-ribose 1-phosphate and the respective free bases. Can use uridine, adenosine, guanosine, cytidine, thymidine, inosine and xanthosine as substrates. Also catalyzes the reverse reactions. This Vibrio cholerae serotype O1 (strain ATCC 39315 / El Tor Inaba N16961) protein is Pyrimidine/purine nucleoside phosphorylase.